A 325-amino-acid chain; its full sequence is Glycerol-3-phosphate dehydrogenase [NAD(P)+] (325 aa).

NADPH contacts are provided by Trp-11, Arg-30, and Lys-103. 3 residues coordinate sn-glycerol 3-phosphate: Lys-103, Gly-131, and Ser-133. An NADPH-binding site is contributed by Ala-135. Sn-glycerol 3-phosphate-binding residues include Lys-186, Asp-242, Ser-252, Arg-253, and Asn-254. Lys-186 (proton acceptor) is an active-site residue. Arg-253 is an NADPH binding site. NADPH is bound by residues Val-279 and Glu-281.

The protein belongs to the NAD-dependent glycerol-3-phosphate dehydrogenase family.

It is found in the cytoplasm. The catalysed reaction is sn-glycerol 3-phosphate + NAD(+) = dihydroxyacetone phosphate + NADH + H(+). The enzyme catalyses sn-glycerol 3-phosphate + NADP(+) = dihydroxyacetone phosphate + NADPH + H(+). The protein operates within membrane lipid metabolism; glycerophospholipid metabolism. Functionally, catalyzes the reduction of the glycolytic intermediate dihydroxyacetone phosphate (DHAP) to sn-glycerol 3-phosphate (G3P), the key precursor for phospholipid synthesis. The chain is Glycerol-3-phosphate dehydrogenase [NAD(P)+] from Wolbachia pipientis subsp. Culex pipiens (strain wPip).